The following is a 249-amino-acid chain: Geranylgeranylglyceryl phosphate synthase (249 aa).

The Mg(2+) site is built by Asp20 and Ser49. Sn-glycerol 1-phosphate is bound by residues 169–175 (YLDAGSG), 200–201 (GG), and 222–223 (GN).

This sequence belongs to the GGGP/HepGP synthase family. Group II subfamily. In terms of assembly, homohexamer. Requires Mg(2+) as cofactor.

The catalysed reaction is sn-glycerol 1-phosphate + (2E,6E,10E)-geranylgeranyl diphosphate = sn-3-O-(geranylgeranyl)glycerol 1-phosphate + diphosphate. Functionally, prenyltransferase that catalyzes the transfer of the geranylgeranyl moiety of geranylgeranyl diphosphate (GGPP) to the C3 hydroxyl of sn-glycerol-1-phosphate (G1P). The chain is Geranylgeranylglyceryl phosphate synthase from Spirosoma linguale (strain ATCC 33905 / DSM 74 / LMG 10896 / Claus 1).